We begin with the raw amino-acid sequence, 127 residues long: Major sperm protein 33 (127 aa).

A2 bears the N-acetylalanine mark. One can recognise an MSP domain in the interval 9–126 (DIQTQPGTKI…RRKNLPIEYN (118 aa)).

In terms of tissue distribution, sperm.

It is found in the cell projection. The protein localises to the pseudopodium. Its subcellular location is the cytoplasm. The protein resides in the cytoskeleton. In terms of biological role, central component in molecular interactions underlying sperm crawling. Forms an extensive filament system that extends from sperm villipoda, along the leading edge of the pseudopod. In Caenorhabditis elegans, this protein is Major sperm protein 33 (msp-33).